The chain runs to 235 residues: tRNA pseudouridine synthase B (235 aa).

D48 acts as the Nucleophile in catalysis.

This sequence belongs to the pseudouridine synthase TruB family. Type 1 subfamily.

It catalyses the reaction uridine(55) in tRNA = pseudouridine(55) in tRNA. Functionally, responsible for synthesis of pseudouridine from uracil-55 in the psi GC loop of transfer RNAs. This is tRNA pseudouridine synthase B from Phocaeicola vulgatus (strain ATCC 8482 / DSM 1447 / JCM 5826 / CCUG 4940 / NBRC 14291 / NCTC 11154) (Bacteroides vulgatus).